The chain runs to 657 residues: Serine/threonine-protein kinase BUR1 (657 aa).

The region spanning 60 to 366 (YREDEKLGQG…AMSAKHHPWF (307 aa)) is the Protein kinase domain. ATP contacts are provided by residues 66 to 74 (LGQGTFGEV) and lysine 89. Residue aspartate 195 is the Proton acceptor of the active site. Threonine 240 carries the post-translational modification Phosphothreonine; by CAK. At serine 400 the chain carries Phosphoserine. Phosphothreonine is present on threonine 405. A disordered region spans residues 414–657 (KGESPVVKNL…FQNSDIADLY (244 aa)). Serine 417 carries the phosphoserine modification. The segment covering 489–501 (NNSSRNNRFSGNS) has biased composition (low complexity). 3 stretches are compositionally biased toward polar residues: residues 535 to 552 (SRYQ…SPND), 564 to 595 (PETN…NGSR), and 614 to 625 (ISPSQGQHQLTS). Positions 627–649 (PIEKKNGSFKDERAKPDESKEFQ) are enriched in basic and acidic residues. Position 634 is a phosphoserine (serine 634).

The protein belongs to the protein kinase superfamily. CMGC Ser/Thr protein kinase family. CDC2/CDKX subfamily. As to quaternary structure, belongs to the BUR kinase complex composed of SGV1/BUR1 and BUR2. Interacts with BUR2 and RBP1.

It is found in the nucleus. The catalysed reaction is L-seryl-[protein] + ATP = O-phospho-L-seryl-[protein] + ADP + H(+). It carries out the reaction L-threonyl-[protein] + ATP = O-phospho-L-threonyl-[protein] + ADP + H(+). The enzyme catalyses [DNA-directed RNA polymerase] + ATP = phospho-[DNA-directed RNA polymerase] + ADP + H(+). Serine/threonine-protein kinase component of the BUR kinase complex involved in transcription regulation. This complex phosphorylates 'Ser-120' of the UBC2/RAD6 ubiquitin-conjugating enzyme (E2), leading to monoubiquitination of histone H2B, the localization of the PAF1 complex to the chromatin, and the silencing of telomeric-associated genes. Also required for histone H3 'Lys-4' trimethylation. May phosphorylate the 'Ser-5' of the RBP1 carboxy-terminal domain (CTD) repeats. Necessary for the recovery from pheromone-induced growth arrest in the cell cycle G1 phase. The kinase activity of the complex requires the presence of BUR2. This chain is Serine/threonine-protein kinase BUR1 (SGV1), found in Saccharomyces cerevisiae (strain ATCC 204508 / S288c) (Baker's yeast).